Reading from the N-terminus, the 711-residue chain is Progesterone receptor (711 aa).

The tract at residues 1–347 (MEDKSKQCLQ…YGFDALPRKI (347 aa)) is modulating, Pro-Rich. 2 consecutive NR C4-type zinc fingers follow at residues 348 to 368 (CLICSDEASGCHYGALTCGSC) and 384 to 408 (CAGRNDCIGDKIRRKNCPSCRLKKC). The segment at residues 348–420 (CLICSDEASG…AGMVLGGRKF (73 aa)) is a DNA-binding region (nuclear receptor). The NR LBD domain occupies 457–691 (QEVQYFPELL…EFPEMMTEVI (235 aa)).

The protein belongs to the nuclear hormone receptor family. NR3 subfamily. In terms of tissue distribution, expressed in all tissues examined: highly expressed in testis and brain. Also expressed in heart, lung, liver, kidney, stomach and small intestine.

Its subcellular location is the nucleus. Functionally, the steroid hormones and their receptors are involved in the regulation of eukaryotic gene expression and affect cellular proliferation and differentiation in target tissues. This chain is Progesterone receptor (pgr), found in Rana dybowskii (Dybovsky's frog).